Reading from the N-terminus, the 499-residue chain is Glucose-6-phosphate isomerase (499 aa).

E352 acts as the Proton donor in catalysis. Catalysis depends on residues H383 and K487.

This sequence belongs to the GPI family.

It localises to the cytoplasm. The catalysed reaction is alpha-D-glucose 6-phosphate = beta-D-fructose 6-phosphate. It functions in the pathway carbohydrate biosynthesis; gluconeogenesis. Its pathway is carbohydrate degradation; glycolysis; D-glyceraldehyde 3-phosphate and glycerone phosphate from D-glucose: step 2/4. Catalyzes the reversible isomerization of glucose-6-phosphate to fructose-6-phosphate. The polypeptide is Glucose-6-phosphate isomerase (Legionella pneumophila (strain Paris)).